Consider the following 149-residue polypeptide: Ribonuclease pancreatic (149 aa).

The first 25 residues, 1 to 25, serve as a signal peptide directing secretion; that stretch reads MGLEKSLILFPLLVLVLGWVQPSLA. Residues lysine 32 and arginine 35 each coordinate substrate. Histidine 37 serves as the catalytic Proton acceptor. Cystine bridges form between cysteine 51/cysteine 109, cysteine 65/cysteine 120, cysteine 83/cysteine 135, and cysteine 90/cysteine 97. Substrate is bound by residues 66–70, lysine 91, and arginine 110; that span reads KPVNT. Catalysis depends on histidine 144, which acts as the Proton donor.

The protein belongs to the pancreatic ribonuclease family. As to quaternary structure, monomer. Interacts with and forms tight 1:1 complexes with RNH1. Dimerization of two such complexes may occur. Interaction with RNH1 inhibits this protein. Pancreas.

Its subcellular location is the secreted. The enzyme catalyses an [RNA] containing cytidine + H2O = an [RNA]-3'-cytidine-3'-phosphate + a 5'-hydroxy-ribonucleotide-3'-[RNA].. The catalysed reaction is an [RNA] containing uridine + H2O = an [RNA]-3'-uridine-3'-phosphate + a 5'-hydroxy-ribonucleotide-3'-[RNA].. In terms of biological role, endonuclease that catalyzes the cleavage of RNA on the 3' side of pyrimidine nucleotides. Acts on single-stranded and double-stranded RNA. The chain is Ribonuclease pancreatic (RNASE1) from Uranomys ruddi (White-bellied brush-furred rat).